The sequence spans 916 residues: Protein translocase subunit SecA (916 aa).

ATP-binding positions include Gln87, 105–109 (GEGKT), and Asp507. Positions 900, 902, 911, and 912 each coordinate Zn(2+).

The protein belongs to the SecA family. In terms of assembly, monomer and homodimer. Part of the essential Sec protein translocation apparatus which comprises SecA, SecYEG and auxiliary proteins SecDF-YajC and YidC. Requires Zn(2+) as cofactor.

It localises to the cell inner membrane. Its subcellular location is the cytoplasm. The enzyme catalyses ATP + H2O + cellular proteinSide 1 = ADP + phosphate + cellular proteinSide 2.. Part of the Sec protein translocase complex. Interacts with the SecYEG preprotein conducting channel. Has a central role in coupling the hydrolysis of ATP to the transfer of proteins into and across the cell membrane, serving both as a receptor for the preprotein-SecB complex and as an ATP-driven molecular motor driving the stepwise translocation of polypeptide chains across the membrane. This chain is Protein translocase subunit SecA, found in Neisseria meningitidis serogroup B (strain ATCC BAA-335 / MC58).